The sequence spans 201 residues: Mediator of RNA polymerase II transcription subunit 22 (201 aa).

A coiled-coil region spans residues 93 to 123; the sequence is SVNESINQRNQQLRTLREECDKKLIALRDDI. The interval 182-201 is disordered; the sequence is SQIHTPPHLNGHGAGMTEHT.

The protein belongs to the Mediator complex subunit 22 family. Component of the Mediator complex.

It localises to the nucleus. Its function is as follows. Component of the Mediator complex, a coactivator involved in the regulated transcription of nearly all RNA polymerase II-dependent genes. Mediator functions as a bridge to convey information from gene-specific regulatory proteins to the basal RNA polymerase II transcription machinery. Mediator is recruited to promoters by direct interactions with regulatory proteins and serves as a scaffold for the assembly of a functional preinitiation complex with RNA polymerase II and the general transcription factors. The chain is Mediator of RNA polymerase II transcription subunit 22 (med22) from Xenopus laevis (African clawed frog).